The sequence spans 493 residues: MLGLQRETSSMYKRTSSRDYSPMIDVEDSSGLLENDVDNEMETTNPSWKCSLPHVLVATISSFLFGYHLGVVNEPLESISSDLGFSGDTLAEGLVVSVCLGGAFLGSLFSGGVADGFGRRRAFQICALPMILGAFVSGVSNSLAVMLLGRFLVGTGMGLGPPVAALYVTEVSPAFVRGTYGSFIQIATCLGLMAALFIGIPVHNITGWWRVCFWLSTIPAALLALGMFLCAESPQWLFKQGKIAEAEAEFERLLGGSHVKTAMAELYKLDLDKTDEPDVVSLSELLYGRHSRVVFIGSTLFALQQLSGINAVFYFSSTVFKSAGVPSDLGNIFVGVSNLLGSVIAMVLMDKVGRKLLLLWSFIGMAAAMALQVGATSSYLPHFSALCLSVGGTLVFVLTFALGAGPVPGLLLPEIFPSRIRAKAMAFCMSVHWVINFFVGLLFLRLLEKLGPRLLYSMFSTFCLMAVMFVKRNVIETKGKTLQEIEISLLAKP.

Polar residues predominate over residues 1 to 14; the sequence is MLGLQRETSSMYKR. Residues 1–24 form a disordered region; it reads MLGLQRETSSMYKRTSSRDYSPMI. Transmembrane regions (helical) follow at residues 52–72, 94–114, 128–148, 151–171, 182–202, 211–231, 293–313, 329–349, 356–376, 392–412, 424–444, and 450–470; these read LPHV…LGVV, LVVS…GGVA, LPMI…VMLL, FLVG…VTEV, SFIQ…GIPV, VCFW…FLCA, VVFI…NAVF, LGNI…MVLM, LLLL…VGAT, GTLV…GLLL, AMAF…LLFL, and LGPR…VMFV.

Belongs to the major facilitator superfamily. Sugar transporter (TC 2.A.1.1) family.

It localises to the plastid. The protein localises to the chloroplast membrane. Its function is as follows. May be involved in the efflux of glucose towards the cytosol. This chain is Probable plastidic glucose transporter 2, found in Arabidopsis thaliana (Mouse-ear cress).